A 625-amino-acid polypeptide reads, in one-letter code: Probable potassium transport system protein Kup (625 aa).

12 helical membrane passes run 13–33 (TALA…LYAL), 53–73 (ILSI…VAIV), 103–123 (IYMI…GIIT), 141–161 (VFDP…FLVQ), 172–192 (FGPI…HSVI), 206–226 (AIQF…AVVL), 250–270 (WFFV…ALLL), 282–302 (LLVP…ATVI), 340–360 (IYVP…ILIF), 369–389 (AYGL…AVFI), 400–420 (VLLL…ATSL), and 422–442 (ILSG…ILMT).

This sequence belongs to the HAK/KUP transporter (TC 2.A.72) family.

The protein resides in the cell inner membrane. The enzyme catalyses K(+)(in) + H(+)(in) = K(+)(out) + H(+)(out). Its function is as follows. Transport of potassium into the cell. Likely operates as a K(+):H(+) symporter. This Acinetobacter baumannii (strain ACICU) protein is Probable potassium transport system protein Kup.